The primary structure comprises 336 residues: Carbamoyl dehydratase HypE (336 aa).

C336 is subject to S-carbamoylcysteine; by HypF; alternate. C336 carries the post-translational modification S-cyanocysteine; by autocatalysis; alternate.

Belongs to the HypE family. As to quaternary structure, homodimer. Forms a complex with HypF. Also forms a complex with HypC, or HybG, and HypD. In terms of processing, modified by HypF, which adds a carboxamido group to the thiolate of the C-terminal cysteine, yielding a protein-S-carboxamide. The carboxamido group is then dehydrated by HypE itself to yield a protein-thiocyanate.

The enzyme catalyses C-terminal S-carboxamide-L-cysteinyl-[HypE protein] + ATP = C-terminal S-cyanate-L-cysteinyl-[HypE protein] + ADP + phosphate + H(+). It functions in the pathway protein modification; [NiFe] hydrogenase maturation. Its function is as follows. Involved in the maturation of [NiFe] hydrogenases. Along with HypF, it catalyzes the synthesis of the CN ligands of the active site iron of [NiFe]-hydrogenases. HypE catalyzes the ATP-dependent dehydration of the carboxamido group attached to its C-terminal cysteine to a cyano group. The cyano group is then transferred from HypE to the HypC-HypD complex or the HybG-HypD complex. This chain is Carbamoyl dehydratase HypE, found in Escherichia coli (strain K12).